Reading from the N-terminus, the 531-residue chain is Type 2 DNA topoisomerase 6 subunit B (531 aa).

ATP-binding positions include Asn42, Asp76, 97–98, 106–113, and Lys427; these read SK and GMYGLGVK.

Belongs to the TOP6B family. In terms of assembly, homodimer. Heterotetramer of two Top6A and two Top6B chains.

The enzyme catalyses ATP-dependent breakage, passage and rejoining of double-stranded DNA.. In terms of biological role, relaxes both positive and negative superturns and exhibits a strong decatenase activity. The polypeptide is Type 2 DNA topoisomerase 6 subunit B (Metallosphaera sedula (strain ATCC 51363 / DSM 5348 / JCM 9185 / NBRC 15509 / TH2)).